We begin with the raw amino-acid sequence, 353 residues long: Stachydrine N-demethylase reductase subunit Stc4 (353 aa).

The 104-residue stretch at 11-114 (SDAEPLECVT…IGPAGKFSIV (104 aa)) folds into the FAD-binding FR-type domain. The 85-residue stretch at 269 to 353 (AEIAFALSGV…KPLRRVSVEA (85 aa)) folds into the 2Fe-2S ferredoxin-type domain. 4 residues coordinate [2Fe-2S] cluster: cysteine 303, cysteine 308, cysteine 311, and cysteine 341.

It in the N-terminal section; belongs to the FAD-binding oxidoreductase type 6 family. In terms of assembly, the system is probably composed of an oxygenase subunit (Stc2) and two reductase subunits (Stc3 and Stc4). Requires FAD as cofactor. It depends on [2Fe-2S] cluster as a cofactor.

In terms of biological role, reductase involved in the catabolism of stachydrine (L-proline betaine), a source of carbon and nitrogen. Part of a Rieske-type oxygenase system that catalyzes the demethylation of stachydrine to produce N-methyl-L-proline (monomethylproline). This subunit is probably involved in the transfer of electrons from NAD(P)H to the catalytic subunit Stc2. This Rhizobium meliloti (strain 1021) (Ensifer meliloti) protein is Stachydrine N-demethylase reductase subunit Stc4.